Consider the following 147-residue polypeptide: METQRASLCLGRWSLWLLLLALVVPSASAQALSYREAVLRAVDRLNEQSSEANLYRLLELDQPPKADEDPGTPKPVSFTVKETVCPRPTRQPPELCDFKENGRVKQCVGTVTLDQIKDPLDITCNEVQGVRGGRLCYCRRRFCICVG.

Positions 1-29 (METQRASLCLGRWSLWLLLLALVVPSASA) are cleaved as a signal peptide. Residues 30-130 (QALSYREAVL…DITCNEVQGV (101 aa)) constitute a propeptide that is removed on maturation. Residues 61-80 (DQPPKADEDPGTPKPVSFTV) are disordered. Intrachain disulfides connect Cys85-Cys96, Cys107-Cys124, Cys136-Cys145, and Cys138-Cys143. Val146 is subject to Valine amide.

This sequence belongs to the cathelicidin family.

Its subcellular location is the secreted. In terms of biological role, microbicidal activity. Active against E.coli, Listeria monocytogenes and C.albicans, in vitro. The sequence is that of Protegrin-2 (NPG2) from Sus scrofa (Pig).